Here is a 453-residue protein sequence, read N- to C-terminus: Allantoinase (453 aa).

Residues His59, His61, Lys146, His186, His242, and Asp315 each contribute to the Zn(2+) site. Lys146 bears the N6-carboxylysine mark.

This sequence belongs to the metallo-dependent hydrolases superfamily. Allantoinase family. As to quaternary structure, homotetramer. Requires Zn(2+) as cofactor. In terms of processing, carboxylation allows a single lysine to coordinate two zinc ions.

The enzyme catalyses (S)-allantoin + H2O = allantoate + H(+). It participates in nitrogen metabolism; (S)-allantoin degradation; allantoate from (S)-allantoin: step 1/1. Its function is as follows. Catalyzes the conversion of allantoin (5-ureidohydantoin) to allantoic acid by hydrolytic cleavage of the five-member hydantoin ring. This is Allantoinase from Salmonella agona (strain SL483).